A 269-amino-acid chain; its full sequence is Rhamnulose-1-phosphate aldolase (269 aa).

E119 is an active-site residue. Zn(2+)-binding residues include H142, H144, and H214.

The protein belongs to the aldolase class II family. RhaD subfamily. Requires Zn(2+) as cofactor.

The protein localises to the cytoplasm. It carries out the reaction L-rhamnulose 1-phosphate = (S)-lactaldehyde + dihydroxyacetone phosphate. Its pathway is carbohydrate degradation; L-rhamnose degradation; glycerone phosphate from L-rhamnose: step 3/3. Its function is as follows. Catalyzes the reversible cleavage of L-rhamnulose-1-phosphate to dihydroxyacetone phosphate (DHAP) and L-lactaldehyde. This Bacteroides thetaiotaomicron (strain ATCC 29148 / DSM 2079 / JCM 5827 / CCUG 10774 / NCTC 10582 / VPI-5482 / E50) protein is Rhamnulose-1-phosphate aldolase.